A 396-amino-acid chain; its full sequence is MNCEREQLRGNQEAAAAPDTMAQPYASAQFAPPQNGIPAEYTAPHPHPAPEYTGQTTVPDHTLNLYPPTQTHSEQSADTSAQTVSGTATQTDDAAPTDGQPQTQPSENTESKSQPKRLHVSNIPFRFRDPDLRQMFGQFGKILDVEIIFNERGSKGFGFVTFENSADADRAREKLHGTVVEGRKIEVNNATARVMTNKKTVNPYTNGWKLNPVVGAVYSPDFYAGTVLLCQANQEGSSMYSGPSSLVYTSAMPGFPYPAATAAAAYRGAHLRGRGRTVYNTFRAAAPPPPIPAYGGVVYQDGFYGADIYGGYAAYRYAQPTPATAAAYSDSYGRVYAADPYHHTLAPAPTYGVGAMNAFAPLTDAKTRSHADDVGLVLSSLQASIYRGGYNRFAPY.

The disordered stretch occupies residues 1–119 (MNCEREQLRG…ESKSQPKRLH (119 aa)). Residues 67–86 (PPTQTHSEQSADTSAQTVSG) are compositionally biased toward polar residues. Positions 87–98 (TATQTDDAAPTD) are enriched in low complexity. Over residues 99 to 112 (GQPQTQPSENTESK) the composition is skewed to polar residues. Residues 116–192 (KRLHVSNIPF…RKIEVNNATA (77 aa)) form the RRM domain. R316 and A337 each carry asymmetric dimethylarginine. R387 carries the post-translational modification Omega-N-methylarginine.

In terms of assembly, binds to the C-terminus of ATXN2. As to expression, detected in brain (at protein level). Detected in heart, brain, neurons, skeletal muscle and embryo.

The protein localises to the nucleus. It localises to the cytoplasm. In terms of biological role, RNA-binding protein that regulates alternative splicing events by binding to 5'-UGCAUGU-3' elements. Prevents binding of U2AF2 to the 3'-splice site. Regulates alternative splicing of tissue-specific exons and of differentially spliced exons during erythropoiesis. The chain is RNA binding protein fox-1 homolog 1 (Rbfox1) from Mus musculus (Mouse).